The chain runs to 669 residues: DNA ligase (669 aa).

Residues 34 to 38, 83 to 84, and glutamate 117 contribute to the NAD(+) site; these read DAEYD and SL. The N6-AMP-lysine intermediate role is filled by lysine 119. NAD(+) contacts are provided by arginine 140, glutamate 177, lysine 293, and lysine 317. Residues cysteine 411, cysteine 414, cysteine 429, and cysteine 434 each contribute to the Zn(2+) site. The BRCT domain maps to 591–669; that stretch reads RLGGRFTGKT…EDEFLKMLEG (79 aa).

Belongs to the NAD-dependent DNA ligase family. LigA subfamily. Requires Mg(2+) as cofactor. Mn(2+) serves as cofactor.

The catalysed reaction is NAD(+) + (deoxyribonucleotide)n-3'-hydroxyl + 5'-phospho-(deoxyribonucleotide)m = (deoxyribonucleotide)n+m + AMP + beta-nicotinamide D-nucleotide.. DNA ligase that catalyzes the formation of phosphodiester linkages between 5'-phosphoryl and 3'-hydroxyl groups in double-stranded DNA using NAD as a coenzyme and as the energy source for the reaction. It is essential for DNA replication and repair of damaged DNA. The protein is DNA ligase of Geotalea daltonii (strain DSM 22248 / JCM 15807 / FRC-32) (Geobacter daltonii).